Here is a 225-residue protein sequence, read N- to C-terminus: 7-cyano-7-deazaguanine synthase (225 aa).

ATP is bound at residue 10-20 (FSGGQDSTTLA). 4 residues coordinate Zn(2+): Cys-190, Cys-205, Cys-208, and Cys-211.

It belongs to the QueC family. Zn(2+) serves as cofactor.

The enzyme catalyses 7-carboxy-7-deazaguanine + NH4(+) + ATP = 7-cyano-7-deazaguanine + ADP + phosphate + H2O + H(+). It participates in purine metabolism; 7-cyano-7-deazaguanine biosynthesis. Its function is as follows. Catalyzes the ATP-dependent conversion of 7-carboxy-7-deazaguanine (CDG) to 7-cyano-7-deazaguanine (preQ(0)). This chain is 7-cyano-7-deazaguanine synthase, found in Helicobacter pylori (strain J99 / ATCC 700824) (Campylobacter pylori J99).